A 413-amino-acid polypeptide reads, in one-letter code: Arogenate dehydratase/prephenate dehydratase 6, chloroplastic (413 aa).

Residues 1–44 (MKALSSSSPILGASQPATATALIARSGRSEWQSSCAILTSKVIS) constitute a chloroplast transit peptide. Positions 117-294 (RVAYQGVPGA…NVTRFVMLAR (178 aa)) constitute a Prephenate dehydratase domain. Residues 308–399 (SIVFAHEKGT…SFLRVLGSYP (92 aa)) form the ACT domain.

Expressed in roots, leaves, stems, flowers and siliques.

The protein localises to the plastid. It localises to the chloroplast stroma. It catalyses the reaction L-arogenate + H(+) = L-phenylalanine + CO2 + H2O. The catalysed reaction is prephenate + H(+) = 3-phenylpyruvate + CO2 + H2O. It participates in amino-acid biosynthesis; L-phenylalanine biosynthesis; L-phenylalanine from L-arogenate: step 1/1. Its pathway is amino-acid biosynthesis; L-phenylalanine biosynthesis; phenylpyruvate from prephenate: step 1/1. In terms of biological role, converts the prephenate produced from the shikimate-chorismate pathway into phenylalanine. Dehydratase that uses arogenate and prephenate as substrates. Utilzes more efficiently arogenate than prephenate. The protein is Arogenate dehydratase/prephenate dehydratase 6, chloroplastic of Arabidopsis thaliana (Mouse-ear cress).